The sequence spans 279 residues: Thiazole synthase (279 aa).

The active-site Schiff-base intermediate with DXP is the Lys116. Residues Gly177, 203–204, and 225–226 each bind 1-deoxy-D-xylulose 5-phosphate; these read AG and NS.

Belongs to the ThiG family. In terms of assembly, homotetramer. Forms heterodimers with either ThiH or ThiS.

It is found in the cytoplasm. It catalyses the reaction [ThiS sulfur-carrier protein]-C-terminal-Gly-aminoethanethioate + 2-iminoacetate + 1-deoxy-D-xylulose 5-phosphate = [ThiS sulfur-carrier protein]-C-terminal Gly-Gly + 2-[(2R,5Z)-2-carboxy-4-methylthiazol-5(2H)-ylidene]ethyl phosphate + 2 H2O + H(+). It functions in the pathway cofactor biosynthesis; thiamine diphosphate biosynthesis. Catalyzes the rearrangement of 1-deoxy-D-xylulose 5-phosphate (DXP) to produce the thiazole phosphate moiety of thiamine. Sulfur is provided by the thiocarboxylate moiety of the carrier protein ThiS. In vitro, sulfur can be provided by H(2)S. The polypeptide is Thiazole synthase (Trichodesmium erythraeum (strain IMS101)).